The chain runs to 574 residues: Glycine--tRNA ligase (574 aa).

Arginine 96 and glutamate 162 together coordinate substrate. ATP-binding positions include 194–196 (RNE), 204–209 (IRLREF), 327–328 (EC), and 450–453 (GIDR). 209–213 (FTQAE) is a substrate binding site. 446–450 (EPSYG) contacts substrate.

The protein belongs to the class-II aminoacyl-tRNA synthetase family.

The protein localises to the cytoplasm. It carries out the reaction tRNA(Gly) + glycine + ATP = glycyl-tRNA(Gly) + AMP + diphosphate. Catalyzes the attachment of glycine to tRNA(Gly). In Methanococcus maripaludis (strain C6 / ATCC BAA-1332), this protein is Glycine--tRNA ligase.